Consider the following 425-residue polypeptide: NAD kinase 2, mitochondrial (425 aa).

Residues 1-45 (MDTSAIQQTLVKIYQRQAWQPPRKASKNETTVGKPRELAGGGSPA) constitute a mitochondrion transit peptide. Positions 20–46 (QPPRKASKNETTVGKPRELAGGGSPAD) are disordered. Residue K59 is modified to N6-acetyllysine; alternate. The residue at position 59 (K59) is an N6-succinyllysine; alternate. S171 is subject to Phosphoserine. At K285 the chain carries N6-succinyllysine. K300 carries the post-translational modification N6-acetyllysine; alternate. K300 carries the post-translational modification N6-succinyllysine; alternate. Residue S350 is modified to Phosphoserine. K380 carries the N6-acetyllysine modification.

Belongs to the NAD kinase family. In terms of assembly, homodimer.

It is found in the mitochondrion. It carries out the reaction NAD(+) + ATP = ADP + NADP(+) + H(+). With respect to regulation, inhibited by NADH, NADPH and NADP(+). Its function is as follows. Mitochondrial NAD(+) kinase that phosphorylates NAD(+) to yield NADP(+). Can use both ATP or inorganic polyphosphate as the phosphoryl donor. This chain is NAD kinase 2, mitochondrial (Nadk2), found in Rattus norvegicus (Rat).